Here is a 512-residue protein sequence, read N- to C-terminus: ATP synthase subunit alpha (512 aa).

169–176 is an ATP binding site; that stretch reads GDRQTGKT.

Belongs to the ATPase alpha/beta chains family. As to quaternary structure, F-type ATPases have 2 components, CF(1) - the catalytic core - and CF(0) - the membrane proton channel. CF(1) has five subunits: alpha(3), beta(3), gamma(1), delta(1), epsilon(1). CF(0) has three main subunits: a(1), b(2) and c(9-12). The alpha and beta chains form an alternating ring which encloses part of the gamma chain. CF(1) is attached to CF(0) by a central stalk formed by the gamma and epsilon chains, while a peripheral stalk is formed by the delta and b chains.

The protein localises to the cell inner membrane. It carries out the reaction ATP + H2O + 4 H(+)(in) = ADP + phosphate + 5 H(+)(out). Functionally, produces ATP from ADP in the presence of a proton gradient across the membrane. The alpha chain is a regulatory subunit. This is ATP synthase subunit alpha from Aromatoleum aromaticum (strain DSM 19018 / LMG 30748 / EbN1) (Azoarcus sp. (strain EbN1)).